Here is a 363-residue protein sequence, read N- to C-terminus: Ribosomal RNA large subunit methyltransferase M (363 aa).

S-adenosyl-L-methionine is bound by residues Ser-194, 227-230 (CPGG), Asp-246, Asp-266, and Asp-284. The active-site Proton acceptor is Lys-313.

It belongs to the class I-like SAM-binding methyltransferase superfamily. RNA methyltransferase RlmE family. RlmM subfamily. As to quaternary structure, monomer.

It is found in the cytoplasm. It carries out the reaction cytidine(2498) in 23S rRNA + S-adenosyl-L-methionine = 2'-O-methylcytidine(2498) in 23S rRNA + S-adenosyl-L-homocysteine + H(+). Its function is as follows. Catalyzes the 2'-O-methylation at nucleotide C2498 in 23S rRNA. The sequence is that of Ribosomal RNA large subunit methyltransferase M from Haemophilus influenzae (strain PittEE).